A 289-amino-acid chain; its full sequence is ATP synthase subunit a (289 aa).

6 helical membrane passes run 43 to 63, 103 to 123, 160 to 180, 193 to 213, 232 to 252, and 259 to 279; these read AFHL…LFIF, VIAP…AVDL, FCVF…GGFI, IFVQ…TLIA, VFIL…GLGV, and AVFH…LTIV.

It belongs to the ATPase A chain family. As to quaternary structure, F-type ATPases have 2 components, CF(1) - the catalytic core - and CF(0) - the membrane proton channel. CF(1) has five subunits: alpha(3), beta(3), gamma(1), delta(1), epsilon(1). CF(0) has three main subunits: a(1), b(2) and c(9-12). The alpha and beta chains form an alternating ring which encloses part of the gamma chain. CF(1) is attached to CF(0) by a central stalk formed by the gamma and epsilon chains, while a peripheral stalk is formed by the delta and b chains.

It localises to the cell inner membrane. Functionally, key component of the proton channel; it plays a direct role in the translocation of protons across the membrane. The chain is ATP synthase subunit a from Pseudomonas putida (strain GB-1).